Consider the following 223-residue polypeptide: Deoxyribose-phosphate aldolase (223 aa).

Asp-89 (proton donor/acceptor) is an active-site residue. Lys-152 acts as the Schiff-base intermediate with acetaldehyde in catalysis. Lys-181 (proton donor/acceptor) is an active-site residue.

Belongs to the DeoC/FbaB aldolase family. DeoC type 1 subfamily.

The protein resides in the cytoplasm. It catalyses the reaction 2-deoxy-D-ribose 5-phosphate = D-glyceraldehyde 3-phosphate + acetaldehyde. Its pathway is carbohydrate degradation; 2-deoxy-D-ribose 1-phosphate degradation; D-glyceraldehyde 3-phosphate and acetaldehyde from 2-deoxy-alpha-D-ribose 1-phosphate: step 2/2. Its function is as follows. Catalyzes a reversible aldol reaction between acetaldehyde and D-glyceraldehyde 3-phosphate to generate 2-deoxy-D-ribose 5-phosphate. In Bacillus cereus (strain ATCC 14579 / DSM 31 / CCUG 7414 / JCM 2152 / NBRC 15305 / NCIMB 9373 / NCTC 2599 / NRRL B-3711), this protein is Deoxyribose-phosphate aldolase.